We begin with the raw amino-acid sequence, 1230 residues long: ATP-dependent helicase/nuclease subunit A (1230 aa).

Residues 3–473 (TKFTKNQQRA…IDLADNFRSQ (471 aa)) enclose the UvrD-like helicase ATP-binding domain. 24-31 (ASAGSGKT) lines the ATP pocket. The UvrD-like helicase C-terminal domain maps to 500-782 (EAKLVPKAAY…RIMTIHASKG (283 aa)).

It belongs to the helicase family. AddA subfamily. In terms of assembly, heterodimer of AddA and AddB/RexB. Requires Mg(2+) as cofactor.

It carries out the reaction Couples ATP hydrolysis with the unwinding of duplex DNA by translocating in the 3'-5' direction.. It catalyses the reaction ATP + H2O = ADP + phosphate + H(+). The heterodimer acts as both an ATP-dependent DNA helicase and an ATP-dependent, dual-direction single-stranded exonuclease. Recognizes the chi site generating a DNA molecule suitable for the initiation of homologous recombination. The AddA nuclease domain is required for chi fragment generation; this subunit has the helicase and 3' -&gt; 5' nuclease activities. The polypeptide is ATP-dependent helicase/nuclease subunit A (Leuconostoc mesenteroides subsp. mesenteroides (strain ATCC 8293 / DSM 20343 / BCRC 11652 / CCM 1803 / JCM 6124 / NCDO 523 / NBRC 100496 / NCIMB 8023 / NCTC 12954 / NRRL B-1118 / 37Y)).